We begin with the raw amino-acid sequence, 153 residues long: uncharacterized protein (153 aa).

An N-terminal signal peptide occupies residues 1–21; sequence MKITITSLLFFLVMIVELASA.

This is an uncharacterized protein from Saccharomyces cerevisiae (strain ATCC 204508 / S288c) (Baker's yeast).